The following is a 398-amino-acid chain: Acetate kinase (398 aa).

Residue N7 coordinates Mg(2+). An ATP-binding site is contributed by K14. Residue R96 participates in substrate binding. The Proton donor/acceptor role is filled by D153. ATP contacts are provided by residues 210 to 214, 284 to 286, and 332 to 336; these read HLGNG, DLR, and GIGEH. E385 is a binding site for Mg(2+).

This sequence belongs to the acetokinase family. In terms of assembly, homodimer. It depends on Mg(2+) as a cofactor. Requires Mn(2+) as cofactor.

It localises to the cytoplasm. The catalysed reaction is acetate + ATP = acetyl phosphate + ADP. It participates in metabolic intermediate biosynthesis; acetyl-CoA biosynthesis; acetyl-CoA from acetate: step 1/2. In terms of biological role, catalyzes the formation of acetyl phosphate from acetate and ATP. Can also catalyze the reverse reaction. This is Acetate kinase from Acaryochloris marina (strain MBIC 11017).